We begin with the raw amino-acid sequence, 360 residues long: Phospho-N-acetylmuramoyl-pentapeptide-transferase (360 aa).

Helical transmembrane passes span tyrosine 21–glycine 41, threonine 73–leucine 93, alanine 94–valine 114, tryptophan 132–glycine 152, isoleucine 168–serine 188, glycine 199–threonine 219, phenylalanine 235–tryptophan 255, valine 263–leucine 283, phenylalanine 288–valine 308, and valine 338–lysine 358.

Belongs to the glycosyltransferase 4 family. MraY subfamily. Requires Mg(2+) as cofactor.

It localises to the cell inner membrane. It catalyses the reaction UDP-N-acetyl-alpha-D-muramoyl-L-alanyl-gamma-D-glutamyl-meso-2,6-diaminopimeloyl-D-alanyl-D-alanine + di-trans,octa-cis-undecaprenyl phosphate = di-trans,octa-cis-undecaprenyl diphospho-N-acetyl-alpha-D-muramoyl-L-alanyl-D-glutamyl-meso-2,6-diaminopimeloyl-D-alanyl-D-alanine + UMP. It participates in cell wall biogenesis; peptidoglycan biosynthesis. Its function is as follows. Catalyzes the initial step of the lipid cycle reactions in the biosynthesis of the cell wall peptidoglycan: transfers peptidoglycan precursor phospho-MurNAc-pentapeptide from UDP-MurNAc-pentapeptide onto the lipid carrier undecaprenyl phosphate, yielding undecaprenyl-pyrophosphoryl-MurNAc-pentapeptide, known as lipid I. The chain is Phospho-N-acetylmuramoyl-pentapeptide-transferase from Pasteurella multocida (strain Pm70).